Reading from the N-terminus, the 594-residue chain is Protein HOTHEAD (594 aa).

The signal sequence occupies residues 1–19; sequence MALKLFLFALLLCLPTSLS. 64–91 contacts FAD; that stretch reads DYIVIGGGTAGCPLAATLSQNFSVLVLE. Catalysis depends on H529, which acts as the Proton acceptor.

This sequence belongs to the GMC oxidoreductase family. FAD is required as a cofactor. As to expression, expressed in roots, leaves, stems, inflorescences and siliques. Found not only in epidermis but also in all sub-epidermal cell layers.

Its function is as follows. Probable FAD-dependent enzyme. Involved in regulating post-genital organ fusion. Required to limit cellular interactions between contacting epidermal cells during floral development. This is Protein HOTHEAD (HTH) from Arabidopsis thaliana (Mouse-ear cress).